Consider the following 72-residue polypeptide: UPF0270 protein YheU (72 aa).

Belongs to the UPF0270 family.

The polypeptide is UPF0270 protein YheU (Salmonella arizonae (strain ATCC BAA-731 / CDC346-86 / RSK2980)).